The sequence spans 353 residues: Photosystem II protein D1 (353 aa).

Helical transmembrane passes span 29 to 46 (YVGW…TATI), 118 to 133 (HFLI…EWEL), and 142 to 156 (WICV…AATA). H118 lines the chlorophyll a pocket. Y126 contributes to the pheophytin a binding site. [CaMn4O5] cluster is bound by residues D170 and E189. The chain crosses the membrane as a helical span at residues 197–218 (FHMLGVAGVFGGSLFSAMHGSL). H198 contacts chlorophyll a. Residues H215 and 264 to 265 (SF) each bind a quinone. Residue H215 participates in Fe cation binding. H272 is a Fe cation binding site. Residues 274–288 (FLAAWPVVGIWFTSL) form a helical membrane-spanning segment. Residues H332, E333, D342, and A344 each coordinate [CaMn4O5] cluster. A propeptide spanning residues 345 to 353 (AVKAPSIIG) is cleaved from the precursor.

This sequence belongs to the reaction center PufL/M/PsbA/D family. PSII is composed of 1 copy each of membrane proteins PsbA, PsbB, PsbC, PsbD, PsbE, PsbF, PsbH, PsbI, PsbJ, PsbK, PsbL, PsbM, PsbT, PsbX, PsbY, PsbZ, Psb30/Ycf12, peripheral proteins PsbO, CyanoQ (PsbQ), PsbU, PsbV and a large number of cofactors. It forms dimeric complexes. The D1/D2 heterodimer binds P680, chlorophylls that are the primary electron donor of PSII, and subsequent electron acceptors. It shares a non-heme iron and each subunit binds pheophytin, quinone, additional chlorophylls, carotenoids and lipids. D1 provides most of the ligands for the Mn4-Ca-O5 cluster of the oxygen-evolving complex (OEC). There is also a Cl(-1) ion associated with D1 and D2, which is required for oxygen evolution. The PSII complex binds additional chlorophylls, carotenoids and specific lipids. is required as a cofactor. In terms of processing, tyr-161 forms a radical intermediate that is referred to as redox-active TyrZ, YZ or Y-Z. C-terminally processed by CtpA; processing is essential to allow assembly of the oxygen-evolving complex and thus photosynthetic growth.

It localises to the cellular thylakoid membrane. It catalyses the reaction 2 a plastoquinone + 4 hnu + 2 H2O = 2 a plastoquinol + O2. Functionally, photosystem II (PSII) is a light-driven water:plastoquinone oxidoreductase that uses light energy to abstract electrons from H(2)O, generating O(2) and a proton gradient subsequently used for ATP formation. It consists of a core antenna complex that captures photons, and an electron transfer chain that converts photonic excitation into a charge separation. The D1/D2 (PsbA/PsbD) reaction center heterodimer binds P680, the primary electron donor of PSII as well as several subsequent electron acceptors. This chain is Photosystem II protein D1, found in Prochlorothrix hollandica.